A 33-amino-acid chain; its full sequence is Cytochrome b6-f complex subunit 8 (33 aa).

A helical transmembrane segment spans residues 2-22; that stretch reads LFTLAWASLAAVFSFSIAMVV.

Belongs to the PetN family. As to quaternary structure, the 4 large subunits of the cytochrome b6-f complex are cytochrome b6, subunit IV (17 kDa polypeptide, PetD), cytochrome f and the Rieske protein, while the 4 small subunits are PetG, PetL, PetM and PetN. The complex functions as a dimer.

It is found in the cellular thylakoid membrane. In terms of biological role, component of the cytochrome b6-f complex, which mediates electron transfer between photosystem II (PSII) and photosystem I (PSI), cyclic electron flow around PSI, and state transitions. This Synechococcus sp. (strain WH7803) protein is Cytochrome b6-f complex subunit 8.